Reading from the N-terminus, the 259-residue chain is HTH-type transcriptional regulator Rv1931c (259 aa).

The span at 104 to 121 shows a compositional bias: basic residues; sequence SHRRHRPRAGTGRRRPRH. Residues 104 to 170 are disordered; that stretch reads SHRRHRPRAG…GAGGHRGRAG (67 aa). The region spanning 174–257 is the HTH araC/xylS-type domain; that stretch reads RIGELAQRAA…GISPDQYRKA (84 aa). 2 consecutive DNA-binding regions (H-T-H motif) follow at residues 176–197 and 224–247; these read GELA…SDEV and VVAI…IRRV.

Its function is as follows. Controls the expression of genes important for virulence. In Mycobacterium tuberculosis (strain ATCC 25618 / H37Rv), this protein is HTH-type transcriptional regulator Rv1931c.